Reading from the N-terminus, the 266-residue chain is Probable catechol O-methyltransferase 1 (266 aa).

S-adenosyl-L-methionine is bound by residues Ile-56, Glu-78, Ser-86, Glu-106, Val-107, Ala-135, and Asp-162. A Mg(2+)-binding site is contributed by Asp-162. Lys-165 is a substrate binding site. Asp-190 and Asn-191 together coordinate Mg(2+). Asn-191 contacts substrate.

It belongs to the class I-like SAM-binding methyltransferase superfamily. Cation-dependent O-methyltransferase family. The cofactor is Mg(2+).

The protein localises to the cytoplasm. The protein resides in the nucleus. It catalyses the reaction a catechol + S-adenosyl-L-methionine = a guaiacol + S-adenosyl-L-homocysteine + H(+). This chain is Probable catechol O-methyltransferase 1, found in Schizosaccharomyces pombe (strain 972 / ATCC 24843) (Fission yeast).